Reading from the N-terminus, the 99-residue chain is uncharacterized protein (99 aa).

This is an uncharacterized protein from Saccharomyces cerevisiae (strain ATCC 204508 / S288c) (Baker's yeast).